The sequence spans 285 residues: Enterobactin synthase component B (285 aa).

An isochorismatase region spans residues 2–213; sequence AIPKLQAYAL…EELLPAPIPA (212 aa). The 76-residue stretch at 209–284 folds into the Carrier domain; the sequence is APIPASKAAL…AWWKLLSREV (76 aa). The Mg(2+) site is built by D227, G242, and D244. S245 bears the O-(pantetheine 4'-phosphoryl)serine mark.

It in the N-terminal section; belongs to the isochorismatase family. Proteins EntB, EntD, EntE, and EntF form a multienzyme complex called enterobactin synthase. Homodimer. Also forms a specific pairwise interaction with EntC; this interaction likely facilitates substrate channeling to connect the EntB and EntC active sites. It depends on Mg(2+) as a cofactor. 4'-phosphopantetheine is transferred from CoA to a specific serine of apo-EntB by EntD. Holo-EntB so formed is then acylated with 2,3-dihydroxybenzoate in a reaction catalyzed by EntE.

Its subcellular location is the cytoplasm. It catalyses the reaction 3 2,3-dihydroxybenzoate + 3 L-serine + 6 ATP = enterobactin + 6 AMP + 6 diphosphate + 4 H(+). The catalysed reaction is isochorismate + H2O = (2S,3S)-2,3-dihydroxy-2,3-dihydrobenzoate + pyruvate. Its pathway is siderophore biosynthesis; enterobactin biosynthesis. Its function is as follows. Involved in the biosynthesis of the siderophore enterobactin (enterochelin), which is a macrocyclic trimeric lactone of N-(2,3-dihydroxybenzoyl)-serine. The serine trilactone serves as a scaffolding for the three catechol functionalities that provide hexadentate coordination for the tightly ligated iron(3+) atoms. EntB is a bifunctional protein that serves as an isochorismate lyase and an aryl carrier protein (ArCP). Catalyzes the conversion of isochorismate to 2,3-dihydro-2,3-dihydroxybenzoate (2,3-diDHB), the precursor of 2,3-dihydroxybenzoate (DHB). In the enterobactin assembly, EntB functions as an aryl carrier protein phosphopantetheinylated near the C terminus by EntD to yield holo-EntB, which is then acylated by EntE with 2,3-dihydroxybenzoyl-AMP to form DHB-holo-EntB. Then this product will serve in the formation of the amide bond between 2,3-dihydroxybenzoate (DHB) and L-serine. The protein is Enterobactin synthase component B of Escherichia coli O157:H7.